The sequence spans 95 residues: UPF0235 protein AnaeK_1146 (95 aa).

It belongs to the UPF0235 family.

In Anaeromyxobacter sp. (strain K), this protein is UPF0235 protein AnaeK_1146.